The following is an 81-amino-acid chain: Three-finger toxin 3FTx-Oxy6 (81 aa).

An N-terminal signal peptide occupies residues 1-21 (MKTLLLSLVVMTIVYLDLGYT). 4 disulfide bridges follow: Cys-24-Cys-43, Cys-36-Cys-61, Cys-65-Cys-73, and Cys-74-Cys-79.

Belongs to the three-finger toxin family. Short-chain subfamily. As to expression, expressed by the venom gland.

Its subcellular location is the secreted. The polypeptide is Three-finger toxin 3FTx-Oxy6 (Oxyuranus microlepidotus (Inland taipan)).